The sequence spans 637 residues: Sodium-dependent proline transporter (637 aa).

Over 1–45 (MKKLQEAHLRKPVTPDLLMTPSDQGDVDLDVDFAADRGNWTGKLD) the chain is Cytoplasmic. The residue at position 20 (threonine 20) is a Phosphothreonine. Phosphoserine is present on serine 22. 3 consecutive transmembrane segments (helical) span residues 46–66 (FLLSCIGYCVGLGNVWRFPYR), 74–93 (AFLVPYFLMLAICGIPLFFL), and 117–137 (GAGAAMLLIVGLVAIYYNMII). At 138-214 (AYVLFYLFAS…QGIGRPGEIR (77 aa)) the chain is on the extracellular side. N-linked (GlcNAc...) asparagine glycosylation is present at asparagine 182. 9 helical membrane passes run 215 to 233 (WNLCLCLLLAWVIVFLCIL), 242 to 259 (VVYFTATFPYLILLMLLV), 295 to 312 (IFYSLGVGFGGLLTFASY), 324 to 345 (FIVTLGNAITSILAGFAIFSVL), 378 to 397 (LPLSPFWSFLFFFMLLTLGL), 425 to 443 (VFSGLICVAMYLMGLILTT), 459 to 479 (SFGLMVVVITTCLAVTRVYGI), 500 to 519 (ACWLFLSPATLLALLVYSIV), and 538 to 556 (LGILMGLLSCLMIPAGMLV). Residues 557 to 637 (AVLREEGSLW…IAEEEEESMM (81 aa)) lie on the Cytoplasmic side of the membrane. Phosphoserine is present on residues serine 573 and serine 582. Threonine 588 carries the post-translational modification Phosphothreonine. At tyrosine 591 the chain carries Phosphotyrosine. Phosphoserine is present on residues serine 598 and serine 600.

This sequence belongs to the sodium:neurotransmitter symporter (SNF) (TC 2.A.22) family. SLC6A7 subfamily. Expressed in subpopulations of putative glutamatergic pathways of rat brain.

It is found in the synaptic cell membrane. It catalyses the reaction L-proline(out) + chloride(out) + 2 Na(+)(out) = L-proline(in) + chloride(in) + 2 Na(+)(in). The catalysed reaction is L-pipecolate(out) + chloride(out) + 2 Na(+)(out) = L-pipecolate(in) + chloride(in) + 2 Na(+)(in). Functionally, brain specific sodium (and chloride)-dependent proline transporter. Terminates the action of proline by its high affinity sodium-dependent reuptake into presynaptic terminals. The sequence is that of Sodium-dependent proline transporter (Slc6a7) from Rattus norvegicus (Rat).